The following is a 290-amino-acid chain: Isopentenyl-diphosphate Delta-isomerase II (290 aa).

The region spanning Met108–Leu260 is the Nudix hydrolase domain. Active-site residues include Cys145 and Glu207.

The protein belongs to the IPP isomerase type 1 family.

It catalyses the reaction isopentenyl diphosphate = dimethylallyl diphosphate. The protein operates within isoprenoid biosynthesis; dimethylallyl diphosphate biosynthesis; dimethylallyl diphosphate from isopentenyl diphosphate: step 1/1. Its pathway is porphyrin-containing compound metabolism; chlorophyll biosynthesis. Its function is as follows. Catalyzes the 1,3-allylic rearrangement of the homoallylic substrate isopentenyl (IPP) to its highly electrophilic allylic isomer, dimethylallyl diphosphate (DMAPP). The chain is Isopentenyl-diphosphate Delta-isomerase II (IPI2) from Clarkia xantiana (Gunsight clarkia).